A 1012-amino-acid chain; its full sequence is DNA polymerase gamma (1012 aa).

It belongs to the DNA polymerase type-A family. Mg(2+) serves as cofactor.

It localises to the mitochondrion. The enzyme catalyses DNA(n) + a 2'-deoxyribonucleoside 5'-triphosphate = DNA(n+1) + diphosphate. Involved in the replication of mitochondrial DNA. This chain is DNA polymerase gamma (MIP1), found in Komagataella pastoris (Yeast).